The sequence spans 602 residues: Elongation factor 4 (602 aa).

Residues 6–188 (DRIRNFCIIA…RIVTRIPPPG (183 aa)) form the tr-type G domain. GTP is bound by residues 18–23 (DHGKST) and 135–138 (NKID).

Belongs to the TRAFAC class translation factor GTPase superfamily. Classic translation factor GTPase family. LepA subfamily.

The protein resides in the cell membrane. It catalyses the reaction GTP + H2O = GDP + phosphate + H(+). In terms of biological role, required for accurate and efficient protein synthesis under certain stress conditions. May act as a fidelity factor of the translation reaction, by catalyzing a one-codon backward translocation of tRNAs on improperly translocated ribosomes. Back-translocation proceeds from a post-translocation (POST) complex to a pre-translocation (PRE) complex, thus giving elongation factor G a second chance to translocate the tRNAs correctly. Binds to ribosomes in a GTP-dependent manner. This chain is Elongation factor 4, found in Pelotomaculum thermopropionicum (strain DSM 13744 / JCM 10971 / SI).